A 1401-amino-acid chain; its full sequence is DNA-directed RNA polymerase subunit beta' (1401 aa).

Residues Cys-70, Cys-72, Cys-85, and Cys-88 each coordinate Zn(2+). Residues Asp-460, Asp-462, and Asp-464 each contribute to the Mg(2+) site. Cys-808, Cys-882, Cys-889, and Cys-892 together coordinate Zn(2+).

It belongs to the RNA polymerase beta' chain family. In terms of assembly, the RNAP catalytic core consists of 2 alpha, 1 beta, 1 beta' and 1 omega subunit. When a sigma factor is associated with the core the holoenzyme is formed, which can initiate transcription. The cofactor is Mg(2+). Requires Zn(2+) as cofactor.

It catalyses the reaction RNA(n) + a ribonucleoside 5'-triphosphate = RNA(n+1) + diphosphate. DNA-dependent RNA polymerase catalyzes the transcription of DNA into RNA using the four ribonucleoside triphosphates as substrates. This Legionella pneumophila (strain Corby) protein is DNA-directed RNA polymerase subunit beta'.